Reading from the N-terminus, the 57-residue chain is uncharacterized protein (57 aa).

The helical transmembrane segment at 34–54 (AALLDAAALVVIPGLLTAAAV) threads the bilayer.

The protein localises to the membrane. This is an uncharacterized protein from Dictyostelium discoideum (Social amoeba).